Consider the following 483-residue polypeptide: Aspartyl/glutamyl-tRNA(Asn/Gln) amidotransferase subunit B (483 aa).

This sequence belongs to the GatB/GatE family. GatB subfamily. As to quaternary structure, heterotrimer of A, B and C subunits.

The catalysed reaction is L-glutamyl-tRNA(Gln) + L-glutamine + ATP + H2O = L-glutaminyl-tRNA(Gln) + L-glutamate + ADP + phosphate + H(+). It carries out the reaction L-aspartyl-tRNA(Asn) + L-glutamine + ATP + H2O = L-asparaginyl-tRNA(Asn) + L-glutamate + ADP + phosphate + 2 H(+). Functionally, allows the formation of correctly charged Asn-tRNA(Asn) or Gln-tRNA(Gln) through the transamidation of misacylated Asp-tRNA(Asn) or Glu-tRNA(Gln) in organisms which lack either or both of asparaginyl-tRNA or glutaminyl-tRNA synthetases. The reaction takes place in the presence of glutamine and ATP through an activated phospho-Asp-tRNA(Asn) or phospho-Glu-tRNA(Gln). The protein is Aspartyl/glutamyl-tRNA(Asn/Gln) amidotransferase subunit B of Rickettsia bellii (strain RML369-C).